We begin with the raw amino-acid sequence, 391 residues long: 3-ketoacyl-CoA thiolase (391 aa).

C95 serves as the catalytic Acyl-thioester intermediate. Residues H347 and C377 each act as proton acceptor in the active site.

It belongs to the thiolase-like superfamily. Thiolase family. Heterotetramer of two alpha chains (FadB) and two beta chains (FadA).

It is found in the cytoplasm. The enzyme catalyses an acyl-CoA + acetyl-CoA = a 3-oxoacyl-CoA + CoA. It participates in lipid metabolism; fatty acid beta-oxidation. Its function is as follows. Catalyzes the final step of fatty acid oxidation in which acetyl-CoA is released and the CoA ester of a fatty acid two carbons shorter is formed. The chain is 3-ketoacyl-CoA thiolase from Pseudomonas syringae pv. syringae (strain B728a).